The sequence spans 636 residues: Alpha-L-iduronidase (636 aa).

Residues 1 to 16 (MLSLLLVLTTLARIHA) form the signal peptide. Residues Pro39, Ile43, and His45 each coordinate alpha-D-mannopyranose. Residues His78, Asn169, and Glu170 each contribute to the alpha-L-iduronate site. The active-site Proton donor is the Glu170. Asn180 is a glycosylation site (N-linked (GlcNAc...) asparagine). Lys257 lines the alpha-L-iduronate pocket. Asn268 is a glycosylation site (N-linked (GlcNAc...) asparagine). Positions 293 and 299 each coordinate alpha-L-iduronate. Catalysis depends on Glu293, which acts as the Nucleophile. Trp300 lines the alpha-D-mannopyranose pocket. Asp342 and Arg356 together coordinate alpha-L-iduronate. N-linked (GlcNAc...) asparagine glycans are attached at residues Asn365, Asn448, Asn453, and Asn483. Cys529 and Cys565 are disulfide-bonded. Asn622 carries an N-linked (GlcNAc...) asparagine glycan.

Belongs to the glycosyl hydrolase 39 family.

Its subcellular location is the lysosome. The catalysed reaction is Hydrolysis of unsulfated alpha-L-iduronosidic linkages in dermatan sulfate.. In terms of biological role, essential lysosomal hydrolase responsible for the degradation of glycosaminoglycans (GAG) such as heparan sulfate. Required for lysosome function and autophagy. Consequently, has an essential role in the development, maintenance and function of various cells, tissues, and organs, including the muscles and the central nervous system (CNS). The protein is Alpha-L-iduronidase of Drosophila melanogaster (Fruit fly).